The sequence spans 319 residues: Cytochrome c biogenesis protein CcsA (319 aa).

The next 7 membrane-spanning stretches (helical) occupy residues 9-29 (ILTH…LITL), 44-64 (GMIV…ASSG), 68-88 (LSNL…LHTI), 143-163 (MLLS…ILII), 223-243 (VISL…VWAN), 257-271 (TWAF…IYLH), and 286-306 (VASI…LLGI).

It belongs to the CcmF/CycK/Ccl1/NrfE/CcsA family. May interact with Ccs1.

The protein localises to the plastid. It is found in the chloroplast thylakoid membrane. Its function is as follows. Required during biogenesis of c-type cytochromes (cytochrome c6 and cytochrome f) at the step of heme attachment. In Agrostis stolonifera (Creeping bentgrass), this protein is Cytochrome c biogenesis protein CcsA.